Here is a 408-residue protein sequence, read N- to C-terminus: ATP phosphoribosyltransferase regulatory subunit (408 aa).

It belongs to the class-II aminoacyl-tRNA synthetase family. HisZ subfamily. In terms of assembly, heteromultimer composed of HisG and HisZ subunits.

Its subcellular location is the cytoplasm. The protein operates within amino-acid biosynthesis; L-histidine biosynthesis; L-histidine from 5-phospho-alpha-D-ribose 1-diphosphate: step 1/9. Functionally, required for the first step of histidine biosynthesis. May allow the feedback regulation of ATP phosphoribosyltransferase activity by histidine. The polypeptide is ATP phosphoribosyltransferase regulatory subunit (Gloeothece citriformis (strain PCC 7424) (Cyanothece sp. (strain PCC 7424))).